The following is a 122-amino-acid chain: Large ribosomal subunit protein uL18 (122 aa).

It belongs to the universal ribosomal protein uL18 family. As to quaternary structure, part of the 50S ribosomal subunit; part of the 5S rRNA/L5/L18/L25 subcomplex. Contacts the 5S and 23S rRNAs.

Functionally, this is one of the proteins that bind and probably mediate the attachment of the 5S RNA into the large ribosomal subunit, where it forms part of the central protuberance. This Citrifermentans bemidjiense (strain ATCC BAA-1014 / DSM 16622 / JCM 12645 / Bem) (Geobacter bemidjiensis) protein is Large ribosomal subunit protein uL18.